The sequence spans 426 residues: 3-phosphoshikimate 1-carboxyvinyltransferase (426 aa).

3-phosphoshikimate contacts are provided by lysine 22, serine 23, and arginine 27. Residue lysine 22 coordinates phosphoenolpyruvate. The phosphoenolpyruvate site is built by glycine 96 and arginine 124. 3-phosphoshikimate is bound by residues serine 170, serine 171, glutamine 172, serine 198, aspartate 314, asparagine 337, and lysine 341. Phosphoenolpyruvate is bound at residue glutamine 172. Catalysis depends on aspartate 314, which acts as the Proton acceptor. 3 residues coordinate phosphoenolpyruvate: arginine 345, arginine 387, and lysine 412.

Belongs to the EPSP synthase family. In terms of assembly, monomer.

Its subcellular location is the cytoplasm. The enzyme catalyses 3-phosphoshikimate + phosphoenolpyruvate = 5-O-(1-carboxyvinyl)-3-phosphoshikimate + phosphate. It participates in metabolic intermediate biosynthesis; chorismate biosynthesis; chorismate from D-erythrose 4-phosphate and phosphoenolpyruvate: step 6/7. Its function is as follows. Catalyzes the transfer of the enolpyruvyl moiety of phosphoenolpyruvate (PEP) to the 5-hydroxyl of shikimate-3-phosphate (S3P) to produce enolpyruvyl shikimate-3-phosphate and inorganic phosphate. This is 3-phosphoshikimate 1-carboxyvinyltransferase from Vibrio atlanticus (strain LGP32) (Vibrio splendidus (strain Mel32)).